The primary structure comprises 553 residues: Serine/threonine-protein phosphatase 2B catalytic subunit A1 (553 aa).

The residue at position 2 (serine 2) is an N-acetylserine. Fe cation-binding residues include aspartate 119, histidine 121, and aspartate 147. Residues aspartate 147 and asparagine 179 each contribute to the Zn(2+) site. Histidine 180 acts as the Proton donor in catalysis. Zn(2+) is bound by residues histidine 228 and histidine 317. Residues 413 to 447 form a disordered region; sequence LDPESEPKAAEETVKARANATKETGTPSDEKASSA. Positions 417 to 427 are enriched in basic and acidic residues; it reads SEPKAAEETVK.

It belongs to the PPP phosphatase family. PP-2B subfamily. As to quaternary structure, composed of two components (A and B), the A component is the catalytic subunit and the B component confers calcium sensitivity. Fe(3+) is required as a cofactor. The cofactor is Zn(2+).

The catalysed reaction is O-phospho-L-seryl-[protein] + H2O = L-seryl-[protein] + phosphate. The enzyme catalyses O-phospho-L-threonyl-[protein] + H2O = L-threonyl-[protein] + phosphate. Functionally, calcium-dependent, calmodulin-stimulated protein phosphatase. This subunit may have a role in the calmodulin activation of calcineurin. In Saccharomyces cerevisiae (strain ATCC 204508 / S288c) (Baker's yeast), this protein is Serine/threonine-protein phosphatase 2B catalytic subunit A1 (CNA1).